Here is a 501-residue protein sequence, read N- to C-terminus: MSSSAMPDVPAPLTNLQFKYTKIFINNEWHSSVSGKKFPVFNPATEEKLCEVEEGDKEDVDKAVKAARQAFQIGSPWRTMDASERGRLLNKLADLIERDHLLLATMEAMNGGKLFSNAYLMDLGGCIKTLRYCAGWADKIQGRTIPMDGNFFTYTRSEPVGVCGQIIPWNFPLLMFLWKIGPALSCGNTVVVKPAEQTPLTALHMGSLIKEAGFPPGVVNIVPGYGPTAGAAISSHMDVDKVAFTGSTEVGKLIKEAAGKSNLKRVSLELGGKSPCIVFADADLDNAVEFAHQGVFYHQGQCCIAASRLFVEESIYDEFVRRSVERAKKYVLGNPLTPGVSQGPQIDKEQYEKILDLIESGKKEGAKLECGGGPWGNKGYFIQPTVFSDVTDDMRIAKEEIFGPVQQIMKFKSLDDVIKRANNTFYGLSAGIFTNDIDKAITVSSALQSGTVWVNCYSVVSAQCPFGGFKMSGNGRELGEYGFHEYTEVKTVTIKISQKNS.

Serine 2 bears the N-acetylserine mark. Lysine 91 and lysine 128 each carry N6-acetyllysine. NAD(+) contacts are provided by residues isoleucine 167–asparagine 170, lysine 193–glutamate 196, glycine 226–proline 227, and glycine 246–serine 247. At lysine 252 the chain carries N6-acetyllysine. Residue glutamate 269 is the Proton acceptor of the active site. Position 269–271 (glutamate 269–glycine 271) interacts with NAD(+). Cysteine 303 (nucleophile) is an active-site residue. The tract at residues leucine 336 to serine 501 is mediates interaction with PRMT3. Threonine 337 bears the Phosphothreonine mark. Glutamate 349–lysine 353 is a binding site for NAD(+). Lysine 353 and lysine 367 each carry N6-acetyllysine. Glutamate 400–phenylalanine 402 contacts NAD(+). Residue lysine 410 is modified to N6-acetyllysine. Position 413 is a phosphoserine (serine 413). Residues lysine 419 and lysine 495 each carry the N6-acetyllysine modification.

This sequence belongs to the aldehyde dehydrogenase family. As to quaternary structure, homotetramer. Interacts with PRMT3; the interaction is direct, inhibits ALDH1A1 aldehyde dehydrogenase activity and is independent of the methyltransferase activity of PRMT3. Post-translationally, the N-terminus is blocked most probably by acetylation. In terms of tissue distribution, expressed in muscle, liver, small intestine, kidney, brain, lung, heart but not detected in erythrocytes (at protein level).

It is found in the cytoplasm. The protein resides in the cytosol. It localises to the cell projection. The protein localises to the axon. It carries out the reaction an aldehyde + NAD(+) + H2O = a carboxylate + NADH + 2 H(+). The enzyme catalyses all-trans-retinal + NAD(+) + H2O = all-trans-retinoate + NADH + 2 H(+). It catalyses the reaction 9-cis-retinal + NAD(+) + H2O = 9-cis-retinoate + NADH + 2 H(+). The catalysed reaction is 11-cis-retinal + NAD(+) + H2O = 11-cis-retinoate + NADH + 2 H(+). It carries out the reaction 13-cis-retinal + NAD(+) + H2O = 13-cis-retinoate + NADH + 2 H(+). The enzyme catalyses 3-deoxyglucosone + NAD(+) + H2O = 2-dehydro-3-deoxy-D-gluconate + NADH + 2 H(+). It catalyses the reaction (E)-4-hydroxynon-2-enal + NAD(+) + H2O = (E)-4-hydroxynon-2-enoate + NADH + 2 H(+). The catalysed reaction is malonaldehyde + NAD(+) + H2O = 3-oxopropanoate + NADH + 2 H(+). It carries out the reaction hexanal + NAD(+) + H2O = hexanoate + NADH + 2 H(+). The enzyme catalyses propanal + NAD(+) + H2O = propanoate + NADH + 2 H(+). It catalyses the reaction acetaldehyde + NAD(+) + H2O = acetate + NADH + 2 H(+). The catalysed reaction is benzaldehyde + NAD(+) + H2O = benzoate + NADH + 2 H(+). It carries out the reaction 4-aminobutanal + NAD(+) + H2O = 4-aminobutanoate + NADH + 2 H(+). It participates in cofactor metabolism; retinol metabolism. Cytosolic dehydrogenase that catalyzes the irreversible oxidation of a wide range of aldehydes to their corresponding carboxylic acid. Functions downstream of retinol dehydrogenases and catalyzes the oxidation of retinaldehyde into retinoic acid, the second step in the oxidation of retinol/vitamin A into retinoic acid. This pathway is crucial to control the levels of retinol and retinoic acid, two important molecules which excess can be teratogenic and cytotoxic. Also oxidizes aldehydes resulting from lipid peroxidation like (E)-4-hydroxynon-2-enal/HNE, malonaldehyde and hexanal that form protein adducts and are highly cytotoxic. By participating for instance to the clearance of (E)-4-hydroxynon-2-enal/HNE in the lens epithelium prevents the formation of HNE-protein adducts and lens opacification. Also functions downstream of fructosamine-3-kinase in the fructosamine degradation pathway by catalyzing the oxidation of 3-deoxyglucosone, the carbohydrate product of fructosamine 3-phosphate decomposition, which is itself a potent glycating agent that may react with lysine and arginine side-chains of proteins. Also has an aminobutyraldehyde dehydrogenase activity and is probably part of an alternative pathway for the biosynthesis of GABA/4-aminobutanoate in midbrain, thereby playing a role in GABAergic synaptic transmission. The sequence is that of Aldehyde dehydrogenase 1A1 from Bos taurus (Bovine).